The chain runs to 167 residues: Thiol peroxidase (167 aa).

The 150-residue stretch at 18 to 167 folds into the Thioredoxin domain; sequence VKVGDQAPDF…PIEAAKALVK (150 aa). Residue C60 is the Cysteine sulfenic acid (-SOH) intermediate of the active site. The cysteines at positions 60 and 94 are disulfide-linked.

It belongs to the peroxiredoxin family. Tpx subfamily. Homodimer.

It catalyses the reaction a hydroperoxide + [thioredoxin]-dithiol = an alcohol + [thioredoxin]-disulfide + H2O. In terms of biological role, thiol-specific peroxidase that catalyzes the reduction of hydrogen peroxide and organic hydroperoxides to water and alcohols, respectively. Plays a role in cell protection against oxidative stress by detoxifying peroxides. This chain is Thiol peroxidase, found in Bacillus subtilis (strain 168).